Consider the following 248-residue polypeptide: MAGESPSIQALRDLREASCGPVAGAADGAPTVTQDLSENVILTSLDDLHNWARLSSLWPLLYGTACCFIEFAALLGSRFDFDRFGLVPRSSPRQADLLIVAGTVTMKMAPALVRLYEQMPEPKYVIAMGACTITGGMFSADSTTAVRGVDKLIPVDLYMPGCPPRPEAIFDAVIKLRKKVANESVADRRQLQQTHRYCTVAHAMTAVEPIVTGAYLRAETQVAALQPGAGLPMPALETADAVQPSEPS.

Positions 66, 67, 131, and 162 each coordinate [4Fe-4S] cluster.

The protein belongs to the complex I 20 kDa subunit family. In terms of assembly, NDH-1 can be composed of about 15 different subunits; different subcomplexes with different compositions have been identified which probably have different functions. [4Fe-4S] cluster serves as cofactor.

The protein localises to the cellular thylakoid membrane. It catalyses the reaction a plastoquinone + NADH + (n+1) H(+)(in) = a plastoquinol + NAD(+) + n H(+)(out). It carries out the reaction a plastoquinone + NADPH + (n+1) H(+)(in) = a plastoquinol + NADP(+) + n H(+)(out). NDH-1 shuttles electrons from an unknown electron donor, via FMN and iron-sulfur (Fe-S) centers, to quinones in the respiratory and/or the photosynthetic chain. The immediate electron acceptor for the enzyme in this species is believed to be plastoquinone. Couples the redox reaction to proton translocation, and thus conserves the redox energy in a proton gradient. Cyanobacterial NDH-1 also plays a role in inorganic carbon-concentration. This is NAD(P)H-quinone oxidoreductase subunit K from Synechococcus sp. (strain WH7803).